The following is a 147-amino-acid chain: Hemoglobin subunit rho (147 aa).

Residues 3-147 (HWSAEEKQLI…VAHALAYKYH (145 aa)) form the Globin domain. Heme b-binding residues include histidine 64 and histidine 93.

The protein belongs to the globin family.

The rho chain is the major early embryonic beta-type hemoglobin chain. This Gallus gallus (Chicken) protein is Hemoglobin subunit rho.